The chain runs to 388 residues: Staphopain A (388 aa).

The signal sequence occupies residues 1 to 25; the sequence is MKRNFPKLIALSLIFSLSVTPIANA. A propeptide spanning residues 26 to 214 is cleaved from the precursor; it reads ESNSNIKAKD…TSQFKSNNYT (189 aa). Catalysis depends on residues Cys-238, His-334, and Asn-355.

It belongs to the peptidase C47 family. In the cytoplasm, prematurely activated/folded ScpA forms a stable non-covalent complex with ScpB. Post-translationally, cleavage leads to the activation of ScpA probably by an auto-catalytic manner.

The protein resides in the secreted. It carries out the reaction Broad endopeptidase action on proteins including elastin, but rather limited hydrolysis of small-molecule substrates. Assays are conveniently made with hemoglobin, casein or Z-Phe-Arg-NHMec as substrate.. Its activity is regulated as follows. Prematurely activated/folded staphopain A is inhibited by staphostatin A (ScpB), which is probably required to protect staphylococcal cytoplasmic proteins from degradation by ScpA. Functionally, cysteine protease that plays an important role in the inhibition of host innate immune response. Cleaves host elastins found in connective tissues, pulmonary surfactant protein A in the lungs, and the chemokine receptor CXCR2 on leukocytes. Proteolytic cleavage of surfactant protein A impairs bacterial phagocytosis by neutrophils while CXCR2 degradation blocks neutrophil activation and chemotaxis. Additionally, promotes vascular leakage by activating the plasma kallikerin/kinin system, resulting in hypotension. The polypeptide is Staphopain A (sspP) (Staphylococcus aureus (strain Mu50 / ATCC 700699)).